The primary structure comprises 231 residues: Verlamelin biosynthesis protein B (231 aa).

It participates in secondary metabolite biosynthesis. Its function is as follows. Part of the gene cluster that mediates the biosynthesis of verlamelin, a lipopeptide that exhibits antifungal activity against plant pathogenic fungi. Verlamelin is a cyclic hexadepsipeptide and is bridged by ester bonding between a 5-hydroxytetradecanoic acid moiety and a carboxyl group on the terminal Val of amide-bonded tetradecanoyl-hexapeptide D-allo-Thr-D-Ala-L-Pro-L-Gln-D-Tyr-L-Val. VlmA and vlmB are altogether regarded as essential components in the biosynthesis of 5-hydroxytetradecanoic acid. VlmA catalyzes the hydroxylation at position C5 of tetradecanoic acid produced in primary metabolism, while the precise function of vlmB still remains to be solved. To be loaded onto the waiting NRPS, 5-hydroxytetradecanoic acid is activated in the form of acyladenylate by the AMP-dependent ligase vlmC. VlmS seems to accept the fatty-acyl intermediate onto the initial module to further elongate amino acid residues by the downstream modules. In addition, in the last module at its C-terminus, vlmS contains a surplus condensation (C) domain that may be involved in cyclization, the last step to form verlamelin. The chain is Verlamelin biosynthesis protein B from Lecanicillium sp.